A 242-amino-acid polypeptide reads, in one-letter code: MQQFEEVRTILEKAKKITVLTGAGASTESGIPDFRSANGLYADANVEMYLSRGYYNRSPKEFWKHYKEIFQINTFHQYKPNRGHRFLAELEEQGKDITILTQNIDGLHQVGGSKHVIDLHGTLQTAHCPKCKMGYDLQYMIDHEVPRCEKCNFILNPDVVLYGDTLPQYQNAIKRLYETDVLIVMGTSLKVQPVASFPQIAKREVGATTILVNEELTGQEYNFDYVFQNKIGEFVEGLSSIK.

The region spanning M1 to K242 is the Deacetylase sirtuin-type domain. Residues A23, T27, F34, R35, Q102, I104, D105, and H120 each contribute to the NAD(+) site. F34 provides a ligand contact to nicotinamide. Nicotinamide is bound by residues I104 and D105. Catalysis depends on H120, which acts as the Proton acceptor. Zn(2+)-binding residues include C128, C131, C148, and C151. NAD(+) contacts are provided by T187, S188, N213, and I231.

Belongs to the sirtuin family. Class U subfamily. The cofactor is Zn(2+).

It localises to the cytoplasm. It catalyses the reaction N(6)-acetyl-L-lysyl-[protein] + NAD(+) + H2O = 2''-O-acetyl-ADP-D-ribose + nicotinamide + L-lysyl-[protein]. NAD-dependent protein deacetylase which modulates the activities of several enzymes which are inactive in their acetylated form. The sequence is that of NAD-dependent protein deacetylase from Bacillus anthracis.